A 254-amino-acid chain; its full sequence is Hydroxyacylglutathione hydrolase (254 aa).

Histidine 54, histidine 56, aspartate 58, histidine 59, histidine 111, aspartate 130, and histidine 168 together coordinate Zn(2+).

Belongs to the metallo-beta-lactamase superfamily. Glyoxalase II family. In terms of assembly, monomer. The cofactor is Zn(2+).

It catalyses the reaction an S-(2-hydroxyacyl)glutathione + H2O = a 2-hydroxy carboxylate + glutathione + H(+). It functions in the pathway secondary metabolite metabolism; methylglyoxal degradation; (R)-lactate from methylglyoxal: step 2/2. In terms of biological role, thiolesterase that catalyzes the hydrolysis of S-D-lactoyl-glutathione to form glutathione and D-lactic acid. This chain is Hydroxyacylglutathione hydrolase, found in Legionella pneumophila (strain Lens).